A 1007-amino-acid chain; its full sequence is Probable beta-galactosidase A (1007 aa).

The first 18 residues, 1–18 (MRLLPVWTAALLAAQAAG), serve as a signal peptide directing secretion. Substrate contacts are provided by tyrosine 96, asparagine 140, alanine 141, and glutamate 142. An N-linked (GlcNAc...) asparagine glycan is attached at asparagine 156. A substrate-binding site is contributed by asparagine 199. The active-site Proton donor is glutamate 200. Cysteine 205 and cysteine 206 are oxidised to a cystine. Position 260 (tyrosine 260) interacts with substrate. Cysteine 266 and cysteine 315 are oxidised to a cystine. Catalysis depends on glutamate 298, which acts as the Nucleophile. Tyrosine 364 contributes to the substrate binding site. N-linked (GlcNAc...) asparagine glycans are attached at residues asparagine 405, asparagine 422, asparagine 621, asparagine 740, asparagine 775, and asparagine 914.

It belongs to the glycosyl hydrolase 35 family.

The protein resides in the secreted. The catalysed reaction is Hydrolysis of terminal non-reducing beta-D-galactose residues in beta-D-galactosides.. Cleaves beta-linked terminal galactosyl residues from gangliosides, glycoproteins, and glycosaminoglycans. The polypeptide is Probable beta-galactosidase A (lacA) (Emericella nidulans (strain FGSC A4 / ATCC 38163 / CBS 112.46 / NRRL 194 / M139) (Aspergillus nidulans)).